Reading from the N-terminus, the 591-residue chain is Aspartate--tRNA ligase (591 aa).

Glu-171 serves as a coordination point for L-aspartate. The interval Gln-195–Lys-198 is aspartate. Arg-217 contributes to the L-aspartate binding site. ATP contacts are provided by residues Arg-217–Glu-219 and Gln-226. Residue His-448 coordinates L-aspartate. Glu-482 provides a ligand contact to ATP. Arg-489 lines the L-aspartate pocket. Gly-534–Arg-537 is an ATP binding site.

The protein belongs to the class-II aminoacyl-tRNA synthetase family. Type 1 subfamily. In terms of assembly, homodimer.

It localises to the cytoplasm. It carries out the reaction tRNA(Asp) + L-aspartate + ATP = L-aspartyl-tRNA(Asp) + AMP + diphosphate. In terms of biological role, catalyzes the attachment of L-aspartate to tRNA(Asp) in a two-step reaction: L-aspartate is first activated by ATP to form Asp-AMP and then transferred to the acceptor end of tRNA(Asp). The protein is Aspartate--tRNA ligase of Aliivibrio fischeri (strain MJ11) (Vibrio fischeri).